The sequence spans 230 residues: 7-cyano-7-deazaguanine synthase (230 aa).

14–24 (LSGGLDSTTTL) contributes to the ATP binding site. Cys194, Cys204, Cys207, and Cys210 together coordinate Zn(2+).

It belongs to the QueC family. Zn(2+) serves as cofactor.

The enzyme catalyses 7-carboxy-7-deazaguanine + NH4(+) + ATP = 7-cyano-7-deazaguanine + ADP + phosphate + H2O + H(+). It functions in the pathway purine metabolism; 7-cyano-7-deazaguanine biosynthesis. In terms of biological role, catalyzes the ATP-dependent conversion of 7-carboxy-7-deazaguanine (CDG) to 7-cyano-7-deazaguanine (preQ(0)). The protein is 7-cyano-7-deazaguanine synthase of Ruthia magnifica subsp. Calyptogena magnifica.